The primary structure comprises 413 residues: Protein LAZY 1 (413 aa).

The chain crosses the membrane as a helical span at residues 71–91 (FTFGGSGLLTIGTLGIAAVAV). Residues 103–124 (DADADSDFDDNDDTAGDDEDQV) show a composition bias toward acidic residues. Disordered stretches follow at residues 103–127 (DADA…VDSA) and 261–308 (EDGG…ASAT). 2 short sequence motifs (nuclear localization signal) span residues 275–298 (RKAG…EKVP) and 338–345 (KKSRKRGS).

This sequence belongs to the LAZY family. As to expression, expressed in the node of the stem, initiating leaf founder cells, young leaf primordia, tips of axillary meristems, spikelet pair meristems of developing tassels and ears, male flower primordia, tassels, ears, silks and seeds. Expressed in leaf sheaths, leaf pulvinus and shoot apical meristem (SAM).

It is found in the cell membrane. Its subcellular location is the nucleus. In terms of biological role, involved in the regulation of shoot gravitropism, and tassel and ear development through the regulation of polar auxin transport (PAT) and auxin signaling. Acts as a negative regulator of basipetal PAT, but positive regulator of lateral auxin transport. Involved in the regulation of shoot gravitropism and leaf angle through the regulation of cell development. This Zea mays (Maize) protein is Protein LAZY 1.